The chain runs to 423 residues: ATP-citrate synthase alpha chain protein 2 (423 aa).

The citrate site is built by N343, T345, and R376.

The protein belongs to the succinate/malate CoA ligase beta subunit family. As to quaternary structure, heterooctamer of 4 alpha and 4 beta chains.

The protein resides in the cytoplasm. It localises to the cytosol. The catalysed reaction is oxaloacetate + acetyl-CoA + ADP + phosphate = citrate + ATP + CoA. Its function is as follows. ATP citrate-lyase is the primary enzyme responsible for the synthesis of cytosolic acetyl-CoA, used for the elongation of fatty acids and biosynthesis of isoprenoids, flavonoids and malonated derivatives. May supply substrate to the cytosolic acetyl-CoA carboxylase, which generates the malonyl-CoA used for the synthesis of a multitude of compounds, including very long chain fatty acids and flavonoids. In contrast to all known animal ACL enzymes having a homomeric structure, plant ACLs are composed of alpha and beta chains. The polypeptide is ATP-citrate synthase alpha chain protein 2 (ACLA-2) (Oryza sativa subsp. japonica (Rice)).